We begin with the raw amino-acid sequence, 428 residues long: Serine--tRNA ligase (428 aa).

L-serine is bound at residue 235–237 (TAE). 266 to 268 (RSE) contributes to the ATP binding site. E289 contributes to the L-serine binding site. 353–356 (EISS) contacts ATP. Position 389 (S389) interacts with L-serine.

Belongs to the class-II aminoacyl-tRNA synthetase family. Type-1 seryl-tRNA synthetase subfamily. Homodimer. The tRNA molecule binds across the dimer.

The protein resides in the cytoplasm. The enzyme catalyses tRNA(Ser) + L-serine + ATP = L-seryl-tRNA(Ser) + AMP + diphosphate + H(+). It carries out the reaction tRNA(Sec) + L-serine + ATP = L-seryl-tRNA(Sec) + AMP + diphosphate + H(+). Its pathway is aminoacyl-tRNA biosynthesis; selenocysteinyl-tRNA(Sec) biosynthesis; L-seryl-tRNA(Sec) from L-serine and tRNA(Sec): step 1/1. Catalyzes the attachment of serine to tRNA(Ser). Is also able to aminoacylate tRNA(Sec) with serine, to form the misacylated tRNA L-seryl-tRNA(Sec), which will be further converted into selenocysteinyl-tRNA(Sec). The polypeptide is Serine--tRNA ligase (Shewanella baltica (strain OS155 / ATCC BAA-1091)).